A 334-amino-acid chain; its full sequence is D-alanine--D-alanine ligase (334 aa).

Positions 111-315 (KRVCLSHGVP…YEDLCIEILR (205 aa)) constitute an ATP-grasp domain. Residue 141 to 196 (AAEFGLPLMLKAPHEGSTIGIAKVETAEGMQAGFDLCAKYEAVVLVEQFVKGRELT) coordinates ATP. The Mg(2+) site is built by Asp-268, Glu-282, and Asn-284.

This sequence belongs to the D-alanine--D-alanine ligase family. The cofactor is Mg(2+). Mn(2+) is required as a cofactor.

It localises to the cytoplasm. The catalysed reaction is 2 D-alanine + ATP = D-alanyl-D-alanine + ADP + phosphate + H(+). It functions in the pathway cell wall biogenesis; peptidoglycan biosynthesis. In terms of biological role, cell wall formation. In Herminiimonas arsenicoxydans, this protein is D-alanine--D-alanine ligase.